A 548-amino-acid polypeptide reads, in one-letter code: MFQLTRSVTWRALERLKQETFDDRISDYFAADPQRFEKMSLRVGGLFLDYSKHHVSDAVLAKLIELADHSALVQRRAQMFSGDIINVTEDRPVLHTALRHLGDEPVYADGKDVMPEIQSTREQIKRFSEAVRSGEWKGYSGERIKDVVNIGIGGSDLGPNMACRALLKYRHPELNFHFVSNVDGTHIQKVLQRLDPATTLFIVSTKTFSTQETLLNAKTARRWFLDNAGEDADVGAHFIAASTNRKAAMEFGIREENVFEFWAWVGGRYSMWSSIGLPIALSIGFDGFMELLEGAHEMDRHFIEAPFAENMPVLMALIGIWYINFIGAETHAIVPYDQALHQLPSFLQQLDMESNGKSVDIFDQPVNYKTGPIVWGQTGSNGQHAFFQLLHQGTRYVPIDFIASLKPEPGFEDHHFALLTNMLAQANAFMEGSQDGSQLDPYSCPGNRPSSTLLLDELTPRNLGALIALYEHKVFVQGVIWNINSFDQWGVQLGKRIAGEISERIDTNVGDFDASTQGLLSLVREYFPASTPDAKASDNNKKSRGKTS.

Glu-353 functions as the Proton donor in the catalytic mechanism. Residues His-384 and Lys-495 contribute to the active site.

The protein belongs to the GPI family.

It localises to the cytoplasm. The catalysed reaction is alpha-D-glucose 6-phosphate = beta-D-fructose 6-phosphate. Its pathway is carbohydrate biosynthesis; gluconeogenesis. The protein operates within carbohydrate degradation; glycolysis; D-glyceraldehyde 3-phosphate and glycerone phosphate from D-glucose: step 2/4. Functionally, catalyzes the reversible isomerization of glucose-6-phosphate to fructose-6-phosphate. This chain is Glucose-6-phosphate isomerase 1, found in Chromohalobacter salexigens (strain ATCC BAA-138 / DSM 3043 / CIP 106854 / NCIMB 13768 / 1H11).